The following is a 200-amino-acid chain: Small ribosomal subunit protein uS2 (200 aa).

Belongs to the universal ribosomal protein uS2 family.

The polypeptide is Small ribosomal subunit protein uS2 (Picrophilus torridus (strain ATCC 700027 / DSM 9790 / JCM 10055 / NBRC 100828 / KAW 2/3)).